The chain runs to 384 residues: S-adenosylmethionine synthase (384 aa).

H15 is an ATP binding site. D17 contributes to the Mg(2+) binding site. Residue E43 participates in K(+) binding. L-methionine contacts are provided by E56 and Q99. Residues 99-109 (QSADINQGVDR) are flexible loop. Residues 164–166 (DAK), 230–231 (RF), D239, 245–246 (RK), A262, and K266 each bind ATP. An L-methionine-binding site is contributed by D239. K270 contributes to the L-methionine binding site.

Belongs to the AdoMet synthase family. In terms of assembly, homotetramer; dimer of dimers. Mg(2+) serves as cofactor. It depends on K(+) as a cofactor.

It is found in the cytoplasm. It carries out the reaction L-methionine + ATP + H2O = S-adenosyl-L-methionine + phosphate + diphosphate. The protein operates within amino-acid biosynthesis; S-adenosyl-L-methionine biosynthesis; S-adenosyl-L-methionine from L-methionine: step 1/1. Its function is as follows. Catalyzes the formation of S-adenosylmethionine (AdoMet) from methionine and ATP. The overall synthetic reaction is composed of two sequential steps, AdoMet formation and the subsequent tripolyphosphate hydrolysis which occurs prior to release of AdoMet from the enzyme. The protein is S-adenosylmethionine synthase of Haemophilus influenzae (strain PittGG).